The following is a 257-amino-acid chain: Imidazole glycerol phosphate synthase subunit HisF (257 aa).

Catalysis depends on residues Asp12 and Asp131.

This sequence belongs to the HisA/HisF family. Heterodimer of HisH and HisF.

The protein localises to the cytoplasm. The enzyme catalyses 5-[(5-phospho-1-deoxy-D-ribulos-1-ylimino)methylamino]-1-(5-phospho-beta-D-ribosyl)imidazole-4-carboxamide + L-glutamine = D-erythro-1-(imidazol-4-yl)glycerol 3-phosphate + 5-amino-1-(5-phospho-beta-D-ribosyl)imidazole-4-carboxamide + L-glutamate + H(+). Its pathway is amino-acid biosynthesis; L-histidine biosynthesis; L-histidine from 5-phospho-alpha-D-ribose 1-diphosphate: step 5/9. Functionally, IGPS catalyzes the conversion of PRFAR and glutamine to IGP, AICAR and glutamate. The HisF subunit catalyzes the cyclization activity that produces IGP and AICAR from PRFAR using the ammonia provided by the HisH subunit. The sequence is that of Imidazole glycerol phosphate synthase subunit HisF from Burkholderia thailandensis (strain ATCC 700388 / DSM 13276 / CCUG 48851 / CIP 106301 / E264).